Consider the following 256-residue polypeptide: Trans-aconitate 2-methyltransferase (256 aa).

The protein belongs to the methyltransferase superfamily. Tam family.

Its subcellular location is the cytoplasm. The catalysed reaction is trans-aconitate + S-adenosyl-L-methionine = (E)-3-(methoxycarbonyl)pent-2-enedioate + S-adenosyl-L-homocysteine. Functionally, catalyzes the S-adenosylmethionine monomethyl esterification of trans-aconitate. The chain is Trans-aconitate 2-methyltransferase from Rhodopseudomonas palustris (strain BisB5).